Reading from the N-terminus, the 316-residue chain is UDP-N-acetylenolpyruvoylglucosamine reductase (316 aa).

The region spanning 30–194 (VGGEADYLVF…LSVKFALAPG (165 aa)) is the FAD-binding PCMH-type domain. Arg173 is a catalytic residue. The Proton donor role is filled by Ser223. The active site involves Glu293.

Belongs to the MurB family. FAD serves as cofactor.

It localises to the cytoplasm. The enzyme catalyses UDP-N-acetyl-alpha-D-muramate + NADP(+) = UDP-N-acetyl-3-O-(1-carboxyvinyl)-alpha-D-glucosamine + NADPH + H(+). Its pathway is cell wall biogenesis; peptidoglycan biosynthesis. Its function is as follows. Cell wall formation. The sequence is that of UDP-N-acetylenolpyruvoylglucosamine reductase from Streptococcus pneumoniae serotype 2 (strain D39 / NCTC 7466).